Here is an 89-residue protein sequence, read N- to C-terminus: Small ribosomal subunit protein uS14 (89 aa).

The segment at 32 to 51 (DYEGLQKLPKNSSPVRLHNR) is disordered.

The protein belongs to the universal ribosomal protein uS14 family. As to quaternary structure, part of the 30S ribosomal subunit. Contacts proteins S3 and S10.

Binds 16S rRNA, required for the assembly of 30S particles and may also be responsible for determining the conformation of the 16S rRNA at the A site. The protein is Small ribosomal subunit protein uS14 of Christiangramia forsetii (strain DSM 17595 / CGMCC 1.15422 / KT0803) (Gramella forsetii).